We begin with the raw amino-acid sequence, 242 residues long: uncharacterized protein (242 aa).

Disordered stretches follow at residues 16-121 (GLYK…GAMA) and 152-178 (PVRP…TQPV). Pro residues-rich tracts occupy residues 50 to 64 (PRPP…PSPA) and 97 to 113 (EPRP…PPGP). The segment covering 157 to 172 (KLPKGKGRLRRPRQSR) has biased composition (basic residues). Thr175 bears the Phosphothreonine mark. A phosphoserine mark is found at Ser192, Ser206, Ser216, Ser232, and Ser238. The tract at residues 215–242 (QSLSLQREPLGSCKLRNSLDSSDSDSAL) is disordered. Low complexity predominate over residues 232–242 (SLDSSDSDSAL).

The protein resides in the cytoplasm. This is an uncharacterized protein from Rattus norvegicus (Rat).